A 545-amino-acid chain; its full sequence is Serine/threonine-protein kinase PAK 1 (545 aa).

The interval 1 to 75 is disordered; the sequence is MSNNGVDIQD…KKREKERPEI (75 aa). Serine 2 carries the post-translational modification N-acetylserine. The residue at position 21 (serine 21) is a Phosphoserine; by PKB and autocatalysis. A Phosphoserine; by autocatalysis modification is found at serine 57. The autoregulatory region stretch occupies residues 70–140; sequence KERPEISLPS…YNSKKTSNSK (71 aa). In terms of domain architecture, CRIB spans 75–88; the sequence is ISLPSDFEHTIHVG. Positions 75-105 are GTPase-binding; the sequence is ISLPSDFEHTIHVGFDAVTGEFTGMPEQWAR. At threonine 84 the chain carries Phosphothreonine; by OXSR1. At serine 115 the chain carries Phosphoserine. Phosphotyrosine is present on residues tyrosine 131 and tyrosine 142. Serine 144 and serine 149 each carry phosphoserine; by autocatalysis. A disordered region spans residues 150–198; it reads AEDYNSSNTLNVKTVSETPAVPPVSEDDEDDDDDATPPPVIAPRPEHTK. The segment covering 152 to 166 has biased composition (polar residues); the sequence is DYNSSNTLNVKTVSE. At tyrosine 153 the chain carries Phosphotyrosine; by JAK2. Position 174 is a phosphoserine (serine 174). Over residues 174 to 184 the composition is skewed to acidic residues; it reads SEDDEDDDDDA. A Phosphothreonine modification is found at threonine 185. At serine 199 the chain carries Phosphoserine; by autocatalysis. A Phosphotyrosine; by JAK2 modification is found at tyrosine 201. At serine 204 the chain carries Phosphoserine; by autocatalysis. Residues 210–250 are disordered; it reads PVTPTRDVATSPISPTENNTTPPDALTRNTEKQKKKPKMSD. Phosphothreonine occurs at positions 212 and 219. A phosphoserine mark is found at serine 220 and serine 223. The segment covering 220–231 has biased composition (polar residues); sequence SPISPTENNTTP. Threonine 225, threonine 229, and threonine 230 each carry phosphothreonine. One can recognise a Protein kinase domain in the interval 270 to 521; it reads YTPFEKIGQG…AKELLQHQFL (252 aa). 276–284 contacts ATP; sequence IGQGASGTV. Tyrosine 285 carries the phosphotyrosine; by JAK2 modification. Residue lysine 299 coordinates ATP. Aspartate 389 functions as the Proton acceptor in the catalytic mechanism. Threonine 423 carries the phosphothreonine; by autocatalysis, BRSK2 and PDPK1 modification.

It belongs to the protein kinase superfamily. STE Ser/Thr protein kinase family. STE20 subfamily. In terms of assembly, homodimer in its autoinhibited state. Active as monomer. Interacts with GIT1. Component of cytoplasmic complexes, which also contains PXN, ARHGEF7 and GIT1. Interacts with NISCH. Interacts with DVL1; mediates the formation of a DVL1, MUSK and PAK1 ternary complex involved in AChR clustering. Binds to the caspase-cleaved p110 isoform of CDC2L1 and CDC2L2, p110C, but not the full-length proteins. Interacts with ARHGEF7. Interacts tightly with GTP-bound but not GDP-bound CDC42/P21 and RAC1. Interacts with SCRIB. Interacts with PDPK1. Interacts (via kinase domain) with RAF1. Interacts with NCK1 and NCK2. Interacts with TBCB. Interacts with BRSK2. Interacts with SNAI1. Interacts with CIB1 (via N-terminal region); the interaction is direct, promotes PAK1 activity and occurs in a calcium-dependent manner. Interacts with INPP5K. Interacts with gamma-tubulin. Interacts with RHOU; the interaction promotes PAK1 activation. It depends on Mg(2+) as a cofactor. In terms of processing, autophosphorylated in trans, meaning that in a dimer, one kinase molecule phosphorylates the other one. Activated by autophosphorylation at Thr-423 in response to a conformation change, triggered by interaction with GTP-bound CDC42 or RAC1. Activated by phosphorylation at Thr-423 by BRSK2 and by PDPK1. Phosphorylated by JAK2 in response to PRL; this increases PAK1 kinase activity. Phosphorylated at Ser-21 by PKB/AKT; this reduces interaction with NCK1 and association with focal adhesion sites. Upon DNA damage, phosphorylated at Thr-212 and translocates to the nucleoplasm. Phosphorylated at tyrosine residues, which can be enhanced by NTN1.

The protein resides in the cytoplasm. The protein localises to the cell junction. It is found in the focal adhesion. It localises to the cell projection. Its subcellular location is the lamellipodium. The protein resides in the cell membrane. The protein localises to the ruffle membrane. It is found in the invadopodium. It localises to the nucleus. Its subcellular location is the nucleoplasm. The protein resides in the chromosome. The protein localises to the cytoskeleton. It is found in the microtubule organizing center. It localises to the centrosome. The enzyme catalyses L-seryl-[protein] + ATP = O-phospho-L-seryl-[protein] + ADP + H(+). It carries out the reaction L-threonyl-[protein] + ATP = O-phospho-L-threonyl-[protein] + ADP + H(+). With respect to regulation, phosphorylation of Thr-84 by OXSR1 inhibits activation. Activated by binding small G proteins. Binding of GTP-bound CDC42 or RAC1 to the autoregulatory region releases monomers from the autoinhibited dimer, and enables activation by phosphorylation of Thr-423. Protein kinase involved in intracellular signaling pathways downstream of integrins and receptor-type kinases that plays an important role in cytoskeleton dynamics, in cell adhesion, migration, proliferation, apoptosis, mitosis, and in vesicle-mediated transport processes. Can directly phosphorylate BAD and protects cells against apoptosis. Activated by interaction with CDC42 and RAC1. Functions as a GTPase effector that links the Rho-related GTPases CDC42 and RAC1 to the JNK MAP kinase pathway. Phosphorylates and activates MAP2K1, and thereby mediates activation of downstream MAP kinases. Involved in the reorganization of the actin cytoskeleton, actin stress fibers and of focal adhesion complexes. Phosphorylates the tubulin chaperone TBCB and thereby plays a role in the regulation of microtubule biogenesis and organization of the tubulin cytoskeleton. Plays a role in the regulation of insulin secretion in response to elevated glucose levels. Part of a ternary complex that contains PAK1, DVL1 and MUSK that is important for MUSK-dependent regulation of AChR clustering during the formation of the neuromuscular junction (NMJ). Activity is inhibited in cells undergoing apoptosis, potentially due to binding of CDC2L1 and CDC2L2. Phosphorylates MYL9/MLC2. Phosphorylates RAF1 at 'Ser-338' and 'Ser-339' resulting in: activation of RAF1, stimulation of RAF1 translocation to mitochondria, phosphorylation of BAD by RAF1, and RAF1 binding to BCL2. Phosphorylates SNAI1 at 'Ser-246' promoting its transcriptional repressor activity by increasing its accumulation in the nucleus. In podocytes, promotes NR3C2 nuclear localization. Required for atypical chemokine receptor ACKR2-induced phosphorylation of LIMK1 and cofilin (CFL1) and for the up-regulation of ACKR2 from endosomal compartment to cell membrane, increasing its efficiency in chemokine uptake and degradation. In synapses, seems to mediate the regulation of F-actin cluster formation performed by SHANK3, maybe through CFL1 phosphorylation and inactivation. Plays a role in RUFY3-mediated facilitating gastric cancer cells migration and invasion. In response to DNA damage, phosphorylates MORC2 which activates its ATPase activity and facilitates chromatin remodeling. In neurons, plays a crucial role in regulating GABA(A) receptor synaptic stability and hence GABAergic inhibitory synaptic transmission through its role in F-actin stabilization. In hippocampal neurons, necessary for the formation of dendritic spines and excitatory synapses; this function is dependent on kinase activity and may be exerted by the regulation of actomyosin contractility through the phosphorylation of myosin II regulatory light chain (MLC). Along with GIT1, positively regulates microtubule nucleation during interphase. Phosphorylates FXR1, promoting its localization to stress granules and activity. Phosphorylates ILK on 'Thr-173' and 'Ser-246', promoting nuclear export of ILK. This Mus musculus (Mouse) protein is Serine/threonine-protein kinase PAK 1.